A 257-amino-acid chain; its full sequence is Imidazole glycerol phosphate synthase subunit HisF (257 aa).

Residues D12 and D131 contribute to the active site.

Belongs to the HisA/HisF family. Heterodimer of HisH and HisF.

Its subcellular location is the cytoplasm. The catalysed reaction is 5-[(5-phospho-1-deoxy-D-ribulos-1-ylimino)methylamino]-1-(5-phospho-beta-D-ribosyl)imidazole-4-carboxamide + L-glutamine = D-erythro-1-(imidazol-4-yl)glycerol 3-phosphate + 5-amino-1-(5-phospho-beta-D-ribosyl)imidazole-4-carboxamide + L-glutamate + H(+). It functions in the pathway amino-acid biosynthesis; L-histidine biosynthesis; L-histidine from 5-phospho-alpha-D-ribose 1-diphosphate: step 5/9. Functionally, IGPS catalyzes the conversion of PRFAR and glutamine to IGP, AICAR and glutamate. The HisF subunit catalyzes the cyclization activity that produces IGP and AICAR from PRFAR using the ammonia provided by the HisH subunit. The sequence is that of Imidazole glycerol phosphate synthase subunit HisF from Burkholderia mallei (strain NCTC 10247).